We begin with the raw amino-acid sequence, 239 residues long: Phosphoribosylaminoimidazole-succinocarboxamide synthase (239 aa).

This sequence belongs to the SAICAR synthetase family.

It catalyses the reaction 5-amino-1-(5-phospho-D-ribosyl)imidazole-4-carboxylate + L-aspartate + ATP = (2S)-2-[5-amino-1-(5-phospho-beta-D-ribosyl)imidazole-4-carboxamido]succinate + ADP + phosphate + 2 H(+). It participates in purine metabolism; IMP biosynthesis via de novo pathway; 5-amino-1-(5-phospho-D-ribosyl)imidazole-4-carboxamide from 5-amino-1-(5-phospho-D-ribosyl)imidazole-4-carboxylate: step 1/2. The protein is Phosphoribosylaminoimidazole-succinocarboxamide synthase of Psychrobacter sp. (strain PRwf-1).